The primary structure comprises 279 residues: PHO85 cyclin-1 (279 aa).

The Cyclin N-terminal domain maps to 19–152 (DIIKFLTDTT…LLQLLNWDLR (134 aa)). The interval 29 to 36 (LRVVPSSN) is required for degradation by DMA1. Position 39 is a phosphothreonine; by PHO85 (Thr39). Ser43 carries the phosphoserine; by PHO85 modification. Glycyl lysine isopeptide (Lys-Gly) (interchain with G-Cter in ubiquitin) cross-links involve residues Lys82 and Lys121.

This sequence belongs to the cyclin family. PCL1,2 subfamily. As to quaternary structure, forms a cyclin-CDK complex with PHO85. Interacts with HMS1, NCP1 and NPA3. Interacts with DMA1. Post-translationally, phosphorylated by PHO85; necessary for interaction with DMA1 and subsequent degradation. Ubiquitinated by E3 ubiquitin ligase DMA1 in response to nutrient condition; this targets PCL1 for destruction.

The protein resides in the cytoplasm. The protein localises to the nucleus. In terms of biological role, G1/S-specific cyclin partner of the cyclin-dependent kinase (CDK) PHO85. Essential for the control of the cell cycle at the G1/S (start) transition. The PCL1-PHO85 cyclin-CDK holoenzyme is involved in phosphorylation of the CDK inhibitor (CKI) SIC1, which is required for its ubiquitination and degradation, releasing repression of b-type cyclins and promoting exit from mitosis. Together with cyclin PCL2, positively controls degradation of sphingoid long chain base kinase LCB4. PCL1-PHO85 phosphorylates LCB4, which is required for its ubiquitination and degradation. PCL1-PHO85 also phosphorylates HMS1, NCP1 and NPA3, which may all have a role in mitotic exit. The polypeptide is PHO85 cyclin-1 (Saccharomyces cerevisiae (strain ATCC 204508 / S288c) (Baker's yeast)).